Reading from the N-terminus, the 595-residue chain is S-(+)-linalool synthase, chloroplastic (595 aa).

A chloroplast-targeting transit peptide spans 1–46 (MVCHVFSSFSSSLIRVLEAPLLLPAASASSSSSSSPASRSGGRRRR). A compositionally biased stretch (low complexity) spans 27–40 (SASSSSSSSPASRS). The disordered stretch occupies residues 27 to 54 (SASSSSSSSPASRSGGRRRRAAHVRPSP). (2E)-geranyl diphosphate-binding residues include arginine 309, aspartate 346, aspartate 350, arginine 487, and aspartate 490. Mg(2+) contacts are provided by aspartate 346 and aspartate 350. Positions 346–350 (DDIFD) match the DDXXD motif motif. The Mg(2+) site is built by aspartate 490, serine 494, and glutamate 498.

It belongs to the terpene synthase family. Tpsb subfamily. The cofactor is Mg(2+). It depends on Mn(2+) as a cofactor.

It is found in the plastid. It localises to the chloroplast. It catalyses the reaction (2E)-geranyl diphosphate + H2O = (S)-linalool + diphosphate. Its pathway is secondary metabolite biosynthesis; terpenoid biosynthesis. In terms of biological role, involved in monoterpene (C10) biosynthesis. The major product is S-(+)-linalool. Linalool production is induced by jasmonate in response to pathogen attack, it possesses antibacterial activity and is important for resistance to the bacterial blight pathogen Xanthomonas oryzae pv. oryzae (Xoo). Plants over-expressing linalool synthase display enhanced resistance to Xoo. The sequence is that of S-(+)-linalool synthase, chloroplastic from Oryza sativa subsp. japonica (Rice).